We begin with the raw amino-acid sequence, 151 residues long: 3-hydroxyacyl-[acyl-carrier-protein] dehydratase FabZ (151 aa).

H56 is a catalytic residue.

It belongs to the thioester dehydratase family. FabZ subfamily.

It is found in the cytoplasm. It catalyses the reaction a (3R)-hydroxyacyl-[ACP] = a (2E)-enoyl-[ACP] + H2O. In terms of biological role, involved in unsaturated fatty acids biosynthesis. Catalyzes the dehydration of short chain beta-hydroxyacyl-ACPs and long chain saturated and unsaturated beta-hydroxyacyl-ACPs. This chain is 3-hydroxyacyl-[acyl-carrier-protein] dehydratase FabZ, found in Nitrobacter hamburgensis (strain DSM 10229 / NCIMB 13809 / X14).